A 72-amino-acid chain; its full sequence is Translation initiation factor IF-1 (72 aa).

The S1-like domain maps to 1-72 (MSKEDVIEVE…TRGRITWRKK (72 aa)).

The protein belongs to the IF-1 family. In terms of assembly, component of the 30S ribosomal translation pre-initiation complex which assembles on the 30S ribosome in the order IF-2 and IF-3, IF-1 and N-formylmethionyl-tRNA(fMet); mRNA recruitment can occur at any time during PIC assembly.

The protein localises to the cytoplasm. In terms of biological role, one of the essential components for the initiation of protein synthesis. Stabilizes the binding of IF-2 and IF-3 on the 30S subunit to which N-formylmethionyl-tRNA(fMet) subsequently binds. Helps modulate mRNA selection, yielding the 30S pre-initiation complex (PIC). Upon addition of the 50S ribosomal subunit IF-1, IF-2 and IF-3 are released leaving the mature 70S translation initiation complex. The sequence is that of Translation initiation factor IF-1 from Alkaliphilus metalliredigens (strain QYMF).